A 465-amino-acid polypeptide reads, in one-letter code: Keratin, type I cytoskeletal 13 (465 aa).

Positions 1 to 28 (MNFTSFSITQGSRPQPPSTRGFSGNSFK) are enriched in polar residues. The disordered stretch occupies residues 1–47 (MNFTSFSITQGSRPQPPSTRGFSGNSFKSDLIPQSRRSHSVYGTPGS). The tract at residues 1–98 (MNFTSFSITQ…SGGSDLLLGT (98 aa)) is head. Positions 99–135 (SGKEAMQNLNDRLASYLEKVRSLEERNRELEQKIREW) are coil 1A. The IF rod domain occupies 100 to 412 (GKEAMQNLND…ILLEGDEGKF (313 aa)). Residues 136-154 (YEKQGAGTKTKDFSHYFKI) are linker 1. The tract at residues 155–246 (IADLQKQIHD…KSHDEEMKAL (92 aa)) is coil 1B. Residues 247–269 (RSQLGGQVNVEVDAAPAEDLTKK) are linker 12. The interval 270–408 (LERMRQQYEQ…RTYRILLEGD (139 aa)) is coil 2. Residues 409–465 (EGKFQTSPHHPSIVTKQTETVVTPVVITNVKTVVEEIIDGKIVSKKEYPGPPEKLMI) are tail.

It belongs to the intermediate filament family. In terms of assembly, heterotetramer of two type I and two type II keratins. As to expression, expressed in skin.

Functionally, type 1 keratin. May maintain oral mucosal cell homeostasis and tissue organization in response to mechanical stress. In Protopterus aethiopicus (Marbled lungfish), this protein is Keratin, type I cytoskeletal 13 (KRT13).